The chain runs to 506 residues: Sporulation kinase D (506 aa).

2 helical membrane-spanning segments follow: residues 17-37 (VKLY…FVYE) and 250-270 (LVLP…LVLY). A Histidine kinase domain is found at 298–505 (STAHEIRNPL…EVTITLPVSA (208 aa)). A Phosphohistidine; by autocatalysis modification is found at His-301.

In terms of assembly, oligomerizes, probably forms homodimers; oligomerization is assisted by FloT. Interacts with FloT.

The protein resides in the cell membrane. It carries out the reaction ATP + protein L-histidine = ADP + protein N-phospho-L-histidine.. Its function is as follows. Phosphorylates the sporulation-regulatory protein spo0F and, to a minor extent, is responsible for heterogeneous expression of spo0A during logarithmical growth. Also phosphorylates spo0A under biofilm growth conditions. The polypeptide is Sporulation kinase D (kinD) (Bacillus subtilis (strain 168)).